A 248-amino-acid polypeptide reads, in one-letter code: 14-3-3 protein gamma-2 (248 aa).

The protein belongs to the 14-3-3 family. In terms of assembly, homodimer, and heterodimer with other family members. In terms of tissue distribution, expressed in brain, gill, heart, intestine, kidney, liver, ovary, skeletal muscle, spleen and testis.

It localises to the cytoplasm. Adapter protein implicated in the regulation of a large spectrum of both general and specialized signaling pathways. Binds to a large number of partners, usually by recognition of a phosphoserine or phosphothreonine motif. Binding generally results in the modulation of the activity of the binding partner. The polypeptide is 14-3-3 protein gamma-2 (Oncorhynchus mykiss (Rainbow trout)).